The chain runs to 242 residues: DNA repair protein RecO (242 aa).

The protein belongs to the RecO family.

In terms of biological role, involved in DNA repair and RecF pathway recombination. The chain is DNA repair protein RecO from Paracoccus denitrificans (strain Pd 1222).